Here is a 442-residue protein sequence, read N- to C-terminus: MSEKHKWWQQVENIDITHLGPKRKAYELLGRHEEQVLINRRDVMEKKDAWDVQEFITQMYIKQLLRHPAFQLLLAFLLLSNAITIALRTNSYLGQKHYELFSTIDDIVLTILICEVLLGWLNGFWIFWKDGWNILNFAIVFILFMGFFIKQLDMVAITYPLRVLRLVHVCMAVEPLARIIKVILQSMPDLANVMALILFFMLVFSVFGVTLFGAFVPKHFQNMGVALYTLFICITQDGWLDIYTDFQMDEREYAMEVGGAIYFAVFITLGAFIGLNLFVVVVTTNLEQMMKTGEEEGHLNIKFTETEEDEDWTDELPLVHCTEARKDTSTVPKEPLVGGPLSNLTEKTCDNFCLVLEAIQENLMEYKEIREELNMIVEEVSSIRFNQEQQNVILHKYTSKSATFLSEPPEGANKQDLITALVSREKVSDSNINMVNKHKFSH.

Residues 1–66 are Cytoplasmic-facing; the sequence is MSEKHKWWQQ…TQMYIKQLLR (66 aa). Residues 67-88 traverse the membrane as a helical segment; that stretch reads HPAFQLLLAFLLLSNAITIALR. Topologically, residues 89 to 98 are extracellular; the sequence is TNSYLGQKHY. Residues 99 to 125 form a helical membrane-spanning segment; it reads ELFSTIDDIVLTILICEVLLGWLNGFW. Topologically, residues 126–129 are cytoplasmic; the sequence is IFWK. Residues 130-153 form a helical membrane-spanning segment; the sequence is DGWNILNFAIVFILFMGFFIKQLD. Residues 154-156 are Extracellular-facing; the sequence is MVA. The helical transmembrane segment at 157-175 threads the bilayer; it reads ITYPLRVLRLVHVCMAVEP. At 176-188 the chain is on the cytoplasmic side; that stretch reads LARIIKVILQSMP. The chain crosses the membrane as a helical span at residues 189–212; sequence DLANVMALILFFMLVFSVFGVTLF. Residues 213–222 are Extracellular-facing; the sequence is GAFVPKHFQN. The helical; Pore-forming intramembrane region spans 223–234; sequence MGVALYTLFICI. Topologically, residues 235 to 255 are extracellular; it reads TQDGWLDIYTDFQMDEREYAM. A helical transmembrane segment spans residues 256-283; that stretch reads EVGGAIYFAVFITLGAFIGLNLFVVVVT. Residues 284–442 lie on the Cytoplasmic side of the membrane; it reads TNLEQMMKTG…NMVNKHKFSH (159 aa).

The protein belongs to the cation channel sperm-associated (TC 1.A.1.19) family. As to quaternary structure, component of the CatSper complex or CatSpermasome composed of the core pore-forming members CATSPER1, CATSPER2, CATSPER3 and CATSPER4 as well as auxiliary members CATSPERB, CATSPERG2, CATSPERD, CATSPERE, CATSPERZ, C2CD6/CATSPERT, SLCO6C1, TMEM249, TMEM262 and EFCAB9. HSPA1 may be an additional auxiliary complex member. The core complex members CATSPER1, CATSPER2, CATSPER3 and CATSPER4 form a heterotetrameric channel. The auxiliary CATSPERB, CATSPERG2, CATSPERD and CATSPERE subunits form a pavilion-like structure over the pore which stabilizes the complex through interactions with CATSPER4, CATSPER3, CATSPER1 and CATSPER2 respectively. SLCO6C1 interacts with CATSPERE and TMEM262/CATSPERH interacts with CATSPERB, further stabilizing the complex. C2CD6/CATSPERT interacts at least with CATSPERD and is required for targeting the CatSper complex in the flagellar membrane. Testis-specific.

The protein resides in the cell projection. The protein localises to the cilium. It localises to the flagellum membrane. The catalysed reaction is Ca(2+)(in) = Ca(2+)(out). In contrast to the human ortholog, not activated by progesterone. Activated by intracellular alkalinization. Its function is as follows. Pore-forming subunit of the CatSper complex, a sperm-specific voltage-gated calcium channel that plays a central role in sperm cell hyperactivation. Controls calcium entry to mediate the hyperactivated motility, a step needed for sperm motility which is essential late in the preparation of sperm for fertilization. The protein is Cation channel sperm-associated protein 4 (Catsper4) of Mus musculus (Mouse).